The chain runs to 70 residues: uncharacterized protein (70 aa).

This is an uncharacterized protein from Schizosaccharomyces pombe (strain 972 / ATCC 24843) (Fission yeast).